Consider the following 170-residue polypeptide: Orotate phosphoribosyltransferase (170 aa).

Residues Arg-86, Lys-87, Lys-90, His-92, and 111–119 (EDVTTSGGS) each bind 5-phospho-alpha-D-ribose 1-diphosphate. 2 residues coordinate orotate: Thr-115 and Arg-143.

The protein belongs to the purine/pyrimidine phosphoribosyltransferase family. PyrE subfamily. In terms of assembly, homodimer. The cofactor is Mg(2+).

It carries out the reaction orotidine 5'-phosphate + diphosphate = orotate + 5-phospho-alpha-D-ribose 1-diphosphate. Its pathway is pyrimidine metabolism; UMP biosynthesis via de novo pathway; UMP from orotate: step 1/2. Its function is as follows. Catalyzes the transfer of a ribosyl phosphate group from 5-phosphoribose 1-diphosphate to orotate, leading to the formation of orotidine monophosphate (OMP). The protein is Orotate phosphoribosyltransferase of Methanoculleus marisnigri (strain ATCC 35101 / DSM 1498 / JR1).